The sequence spans 178 residues: Putative metal-dependent hydrolase GTNG_0529 (178 aa).

Residues His68, His161, and His165 each coordinate Zn(2+).

This sequence belongs to the metal hydrolase YfiT family. Homodimer. It depends on Zn(2+) as a cofactor.

The protein resides in the cytoplasm. Possible metal-dependent hydrolase. This chain is Putative metal-dependent hydrolase GTNG_0529, found in Geobacillus thermodenitrificans (strain NG80-2).